Here is a 498-residue protein sequence, read N- to C-terminus: MAVMKIKGAATVAGTWLNEAVSFVVFCILDIVDSFLCLLYKAADYLFEAEWKPCYCLSDKEPITTTRGKILLSHNNGESKILTLSPLQELGGRSKIELEDISETLYTRPSLISDISTISVNELNKRFVKVTRSESECSGHNEKTKNKRRRSLTKSSLTVNFTVVEMLRGKIRPQNLNHDISRWSDCDCGFCTSWASTSDKNHSLFVKTQIPNGVTAKEDVLFIHGFISSSAFWTETVFPSLSASSSTHRLFAVDLLGFGKSPKPADSLYTLREHVEMIEKSVLHKYNVKSFHIVAHSLGCILALSLAARHGGLIKSLTLLAPPYYPVPKGEKKPRQYVMKKVAPRKVWPPIALGASMACWYEHISRTICLLICKHHRVWQFIAGVLTRNNRTVNFLIEGFMCHTHNAAWHTLHNIICGTGSKLDTYLDIVRDKLKCNVTIFHGGDDELIPVECSYNVKQRIPRARVKVIEHKDHITMVVGRQDEFARELQEIWKTSSC.

A signal peptide spans 1–55 (MAVMKIKGAATVAGTWLNEAVSFVVFCILDIVDSFLCLLYKAADYLFEAEWKPCY). C56 is lipidated: N-palmitoyl cysteine. The AB hydrolase-1 domain occupies 220–326 (VLFIHGFISS…LTLLAPPYYP (107 aa)). The active site involves H224. Catalysis depends on S297, which acts as the Nucleophile. Residues D446 and H474 each act as charge relay system in the active site.

The protein resides in the cell membrane. It is found in the secreted. Its subcellular location is the cell wall. Involved in cuticle development and morphogenesis. The polypeptide is Probable lysophospholipase BODYGUARD 3 (Arabidopsis thaliana (Mouse-ear cress)).